We begin with the raw amino-acid sequence, 445 residues long: Argininosuccinate synthase (445 aa).

ATP-binding positions include 17–25 (AFSGGLDTS) and alanine 43. Tyrosine 99 contributes to the L-citrulline binding site. ATP contacts are provided by glycine 129 and threonine 131. 3 residues coordinate L-aspartate: threonine 131, asparagine 135, and aspartate 136. Residue asparagine 135 participates in L-citrulline binding. Aspartate 136 contributes to the ATP binding site. The L-citrulline site is built by arginine 139 and serine 192. Aspartate 194 contacts ATP. The L-citrulline site is built by threonine 201, glutamate 203, and glutamate 280.

It belongs to the argininosuccinate synthase family. Type 2 subfamily. In terms of assembly, homotetramer.

The protein localises to the cytoplasm. The enzyme catalyses L-citrulline + L-aspartate + ATP = 2-(N(omega)-L-arginino)succinate + AMP + diphosphate + H(+). Its pathway is amino-acid biosynthesis; L-arginine biosynthesis; L-arginine from L-ornithine and carbamoyl phosphate: step 2/3. The polypeptide is Argininosuccinate synthase (Burkholderia ambifaria (strain ATCC BAA-244 / DSM 16087 / CCUG 44356 / LMG 19182 / AMMD) (Burkholderia cepacia (strain AMMD))).